We begin with the raw amino-acid sequence, 137 residues long: Fatty acid-binding protein homolog 8 (137 aa).

The Nuclear localization signal signature appears at 24-34 (KEIGVGLLIRK).

It belongs to the calycin superfamily. Fatty-acid binding protein (FABP) family. Monomer. Intestine.

It is found in the lysosome. Its subcellular location is the nucleus. In terms of biological role, lysosomal lipid chaperone which binds to a wide range of unsaturated fatty acids, including high affinity binding to oleic acid and oleoylethanolamide, to transport them into the nucleus. As part of a lysosome-to-nucleus retrograde lipid signaling pathway, translocates into the nucleus where it activates the transcription of genes promoting longevity and activation of mitochondrial beta oxidation. In Caenorhabditis elegans, this protein is Fatty acid-binding protein homolog 8.